The chain runs to 123 residues: Integration host factor subunit alpha (123 aa).

The protein belongs to the bacterial histone-like protein family. As to quaternary structure, heterodimer of an alpha and a beta chain.

In terms of biological role, this protein is one of the two subunits of integration host factor, a specific DNA-binding protein that functions in genetic recombination as well as in transcriptional and translational control. The protein is Integration host factor subunit alpha of Polaromonas naphthalenivorans (strain CJ2).